Reading from the N-terminus, the 209-residue chain is Octanoyltransferase (209 aa).

Positions 30–209 (DHEPEIIYLV…IQTEFNKIFK (180 aa)) constitute a BPL/LPL catalytic domain. Substrate is bound by residues 69–76 (RGGKFTFH), 143–145 (AIG), and 156–158 (GVA). C174 (acyl-thioester intermediate) is an active-site residue.

It belongs to the LipB family.

Its subcellular location is the cytoplasm. It catalyses the reaction octanoyl-[ACP] + L-lysyl-[protein] = N(6)-octanoyl-L-lysyl-[protein] + holo-[ACP] + H(+). It functions in the pathway protein modification; protein lipoylation via endogenous pathway; protein N(6)-(lipoyl)lysine from octanoyl-[acyl-carrier-protein]: step 1/2. Functionally, catalyzes the transfer of endogenously produced octanoic acid from octanoyl-acyl-carrier-protein onto the lipoyl domains of lipoate-dependent enzymes. Lipoyl-ACP can also act as a substrate although octanoyl-ACP is likely to be the physiological substrate. This Rickettsia africae (strain ESF-5) protein is Octanoyltransferase.